A 313-amino-acid chain; its full sequence is Ribosomal RNA small subunit methyltransferase H (313 aa).

S-adenosyl-L-methionine-binding positions include 33–35, D53, F82, D103, and Q110; that span reads AGH.

This sequence belongs to the methyltransferase superfamily. RsmH family.

The protein localises to the cytoplasm. The enzyme catalyses cytidine(1402) in 16S rRNA + S-adenosyl-L-methionine = N(4)-methylcytidine(1402) in 16S rRNA + S-adenosyl-L-homocysteine + H(+). Specifically methylates the N4 position of cytidine in position 1402 (C1402) of 16S rRNA. The sequence is that of Ribosomal RNA small subunit methyltransferase H from Ruminiclostridium cellulolyticum (strain ATCC 35319 / DSM 5812 / JCM 6584 / H10) (Clostridium cellulolyticum).